The following is a 708-amino-acid chain: Tryptophan synthase (708 aa).

Residues 1 to 305 are tryptophan synthase alpha chain; sequence MEGIKQTFQR…EADIDAQLAA (305 aa). Catalysis depends on proton acceptor residues E49 and D60. Residues 306-708 are tryptophan synthase beta chain; sequence LHGTIPKRFG…GPKIGWDLRF (403 aa). N6-(pyridoxal phosphate)lysine is present on K392.

It in the N-terminal section; belongs to the TrpA family. This sequence in the C-terminal section; belongs to the TrpB family. Pyridoxal 5'-phosphate serves as cofactor.

The enzyme catalyses (1S,2R)-1-C-(indol-3-yl)glycerol 3-phosphate + L-serine = D-glyceraldehyde 3-phosphate + L-tryptophan + H2O. It functions in the pathway amino-acid biosynthesis; L-tryptophan biosynthesis; L-tryptophan from chorismate: step 5/5. The protein is Tryptophan synthase (trp-3) of Neurospora crassa (strain ATCC 24698 / 74-OR23-1A / CBS 708.71 / DSM 1257 / FGSC 987).